Consider the following 3926-residue polypeptide: Hybrid PKS-NRPS synthetase LUC5 (3926 aa).

A Ketosynthase family 3 (KS3) domain is found at 8-439; it reads REPIAIVGTA…GTNAHAIIES (432 aa). Residues C181, H318, and H359 each act as for beta-ketoacyl synthase activity in the active site. A malonyl-CoA:ACP transacylase (MAT) domain region spans residues 545–863; that stretch reads VFTGQGAQWP…QGALTRNVHD (319 aa). The interval 932 to 1065 is N-terminal hotdog fold; sequence HPLLGTRSTE…GHLRVDFGSE (134 aa). The dehydratase (DH) domain stretch occupies residues 932–1225; sequence HPLLGTRSTE…GLTCTSLLRP (294 aa). In terms of domain architecture, PKS/mFAS DH spans 932–1228; the sequence is HPLLGTRSTE…CTSLLRPGPS (297 aa). H964 functions as the Proton acceptor; for dehydratase activity in the catalytic mechanism. Residues 1081 to 1228 form a C-terminal hotdog fold region; sequence LTSVNIERFY…CTSLLRPGPS (148 aa). D1138 serves as the catalytic Proton donor; for dehydratase activity. Residues 1344-1572 are C-methyltransferase (CMeT) domain; that stretch reads IRAVGENLTE…VNDFYDPSKY (229 aa). Residues 2091–2265 form a ketoreductase (KR) domain 1 region; it reads TYLLAGCTGG…AASVIHIGMI (175 aa). Residues 2371-2448 enclose the Carrier 1 domain; the sequence is EMLEVVEEEF…EICSTAVASL (78 aa). S2408 is subject to O-(pantetheine 4'-phosphoryl)serine. A compositionally biased stretch (polar residues) spans 2474-2506; that stretch reads VSGNGSSSSRAPTEFNSSTLKSGAQSTQGTSVS. The tract at residues 2474 to 2518 is disordered; sequence VSGNGSSSSRAPTEFNSSTLKSGAQSTQGTSVSGDKDTNSVDGSA. Positions 2507 to 2518 are enriched in basic and acidic residues; that stretch reads GDKDTNSVDGSA. The segment at 2525 to 2810 is condensation; sequence PLSFAQERIW…VNLLPLRFQL (286 aa). The interval 2979 to 3389 is adenylation; it reads DWVKRQPDAI…RIAGDSQIKL (411 aa). Residues 3501–3580 enclose the Carrier 2 domain; it reads ETLTTTQERL…GMAAKIDGST (80 aa). At S3540 the chain carries O-(pantetheine 4'-phosphoryl)serine. Residues 3619–3840 form a thiolester reductase (TE) domain region; the sequence is LTGATGFLGL…DFVPVEQVAD (222 aa).

The protein in the C-terminal section; belongs to the NRP synthetase family.

It participates in mycotoxin biosynthesis. Hybrid PKS-NRPS synthetase; part of the gene cluster that mediates the biosynthesis of the mycotoxin lucilactaene and the lucilactaene-related compound NG-391 that act as cell cycle inhibitors with potent growth inhibitory activity against malarial parasites, moderate growth inhibitory activity against cancer cells, and no activity against bacteria and fungi. The hybrid PKS-NRPS synthetase LUC5 is responsible for the condensation of one acetyl-coenzyme A (CoA) unit with six malonyl-CoA units and the amide linkage of the arising heptaketide and homoserine, subsequently releasing the first intermediate prelucilactaene B, as an alcohol with an open ring structure. Lucilactaene and NG-391 lack the 7-methyl group present in fusarins which is inserted in fusarins by the C-methyltransferase (CMeT) domain of the fusarin synthetase FUS1, suggesting that the CMet domain of LUC5 does not methylate this position. Within the pathway, both the cytochrome P450 monooxygenase LUC2 and the hydrolase LUC6 function in parallel in modification of prelucilactaene B. LUC6 may catalyze the 2-pyrrolidone ring formation to form prelucilactaene C from prelucilactaene B, followed by C-15 hydroxylation by the same enzyme to give prelucilactaene D, which is then converted to prelucilactaene E by epoxidation, and finally to prelucilactaene F by cyclization. Prelucilactane D, prelucilactaene E, and prelucilactaene F can be converted to dihydrolucilactaene, NG391, and lucilactaene, respectively, via C-20 methyl group hydroxylation by the cytochrome P450 monooxygenase LUC2. However, LUC2, unlike FUS8 in fusarin C biosynthesis, is not enough for the full oxidation of the C-20 methyl group into carboxylic acid, which is a prerequisite for the final methylation step. The aldehyde dehydrogenase LUC3 is involved in the biosynthesis by further oxidation of the C-20 alcoholic analog prelucilactaene G into a carboxylic derivative. This unidentified carboxylic derivative may be converted to demethyllucilactaene. As the last step, the methyltransferase LUC1 methylates the hydroxyl group at C-21 of demethyllucilactaene to generate lucilactaene. In Fusarium sp, this protein is Hybrid PKS-NRPS synthetase LUC5.